The primary structure comprises 259 residues: 5'-nucleotidase SurE (259 aa).

A divalent metal cation contacts are provided by D8, D9, S41, and N99.

It belongs to the SurE nucleotidase family. It depends on a divalent metal cation as a cofactor.

Its subcellular location is the cytoplasm. The enzyme catalyses a ribonucleoside 5'-phosphate + H2O = a ribonucleoside + phosphate. Nucleotidase that shows phosphatase activity on nucleoside 5'-monophosphates. The protein is 5'-nucleotidase SurE of Synechococcus sp. (strain JA-3-3Ab) (Cyanobacteria bacterium Yellowstone A-Prime).